A 1332-amino-acid polypeptide reads, in one-letter code: Xanthine dehydrogenase/oxidase (1332 aa).

Residues 4–91 (DELVFFVNGK…HVAVTTVEGI (88 aa)) enclose the 2Fe-2S ferredoxin-type domain. [2Fe-2S] cluster contacts are provided by Cys43, Cys48, Cys51, Cys73, Cys113, Cys116, Cys148, and Cys150. Positions 229-414 (FEGERVTWIQ…LSIEIPYSRE (186 aa)) constitute an FAD-binding PCMH-type domain. Residues 257-264 (LVVGNTEI), Phe337, 347-351 (SLGGN), Asp360, Leu404, and Lys422 contribute to the FAD site. The cysteines at positions 535 and 992 are disulfide-linked. The Mo-molybdopterin site is built by Gln767 and Phe798. Substrate contacts are provided by Glu802 and Arg880. Mo-molybdopterin is bound at residue Arg912. Phe914 and Thr1010 together coordinate substrate. Ala1079 provides a ligand contact to Mo-molybdopterin. Glu1261 functions as the Proton acceptor in the catalytic mechanism.

It belongs to the xanthine dehydrogenase family. As to quaternary structure, homodimer. Interacts with BTN1A1. Requires [2Fe-2S] cluster as cofactor. FAD serves as cofactor. It depends on Mo-molybdopterin as a cofactor. In terms of processing, subject to partial proteolysis; this alters the enzyme from the dehydrogenase form (D) to the oxidase form (O). Contains sulfhydryl groups that are easily oxidized (in vitro); this alters the enzyme from the dehydrogenase form (D) to the oxidase form (O). Detected in milk (at protein level).

The protein localises to the cytoplasm. Its subcellular location is the peroxisome. It is found in the secreted. The catalysed reaction is xanthine + NAD(+) + H2O = urate + NADH + H(+). The enzyme catalyses hypoxanthine + NAD(+) + H2O = xanthine + NADH + H(+). It catalyses the reaction xanthine + O2 + H2O = urate + H2O2. Can be converted from the dehydrogenase form (D) to the oxidase form (O) irreversibly by proteolysis or reversibly through the oxidation of sulfhydryl groups. Its function is as follows. Key enzyme in purine degradation. Catalyzes the oxidation of hypoxanthine to xanthine. Catalyzes the oxidation of xanthine to uric acid. Contributes to the generation of reactive oxygen species. The chain is Xanthine dehydrogenase/oxidase (XDH) from Bos taurus (Bovine).